Reading from the N-terminus, the 169-residue chain is Sorting nexin-24 (169 aa).

M1 carries the post-translational modification N-acetylmethionine. In terms of domain architecture, PX spans 1–125; the sequence is MEVYIPSFRY…SFDETESEES (125 aa). 4 residues coordinate a 1,2-diacyl-sn-glycero-3-phospho-(1D-myo-inositol-3-phosphate): R38, S40, K61, and R74. Residues S113 and S116 each carry the phosphoserine modification.

The protein belongs to the sorting nexin family.

The protein resides in the cytoplasmic vesicle membrane. In terms of biological role, may be involved in several stages of intracellular trafficking. The chain is Sorting nexin-24 (SNX24) from Bos taurus (Bovine).